Here is a 439-residue protein sequence, read N- to C-terminus: Probable E3 ubiquitin-protein ligase makorin-1 (439 aa).

3 consecutive C3H1-type zinc fingers follow at residues 18–45, 48–74, and 163–190; these read WTKH…HDLS, KQTM…HTKP, and EMKK…HGDV. The tract at residues 73 to 118 is disordered; it reads KPSKQDEVPSSKPSMPLTAAPLAGTPEPVSDGPGGTTGAQEKPQGS. The tract at residues 191–218 is makorin-type Cys-His; the sequence is CDMCGLQVLHPSDTSQRSQHIRACIEAH. An RING-type zinc finger spans residues 236–290; it reads CGVCMEVVFEKTNPSERRFGILSNCCHCYCLKCIRKWRSAKQFESKIIKSCPECR. The segment at 319 to 348 adopts a C3H1-type 4 zinc-finger fold; the sequence is GMGTKPCRYFDEGRGTCPFGANCFYKHAFP. The tract at residues 352 to 371 is disordered; that stretch reads LEEPQPQRRQNGSNGRNRNT. The segment covering 358 to 368 has biased composition (low complexity); the sequence is QRRQNGSNGRN.

The catalysed reaction is S-ubiquitinyl-[E2 ubiquitin-conjugating enzyme]-L-cysteine + [acceptor protein]-L-lysine = [E2 ubiquitin-conjugating enzyme]-L-cysteine + N(6)-ubiquitinyl-[acceptor protein]-L-lysine.. Its pathway is protein modification; protein ubiquitination. In terms of biological role, E3 ubiquitin ligase catalyzing the covalent attachment of ubiquitin moieties onto substrate proteins. The chain is Probable E3 ubiquitin-protein ligase makorin-1 from Danio rerio (Zebrafish).